A 1021-amino-acid chain; its full sequence is MGKGVGRDKYEPAAVSEHGDKKKAKKERDMDELKKEVSMDDHKLSLDELHRKYGTDLSRGLTPARAAEILARDGPNALTPPPTTPEWVKFCRQLFGGFSMLLWIGAILCFLAYGIQAATEEEPQNDNLYLGVVLSAVVIITGCFSYYQEAKSSKIMESFKNMVPQQALVIRNGEKMSINAEEVVVGDLVEVKGGDRIPADLRIISANGCKVDNSSLTGESEPQTRSPDFTNENPLETRNIAFFSTNCVEGTARGIVVYTGDRTVMGRIATLASGLEGGQTPIAAEIEHFIHIITGVAVFLGVSFFILSLILEYTWLEAVIFLIGIIVANVPEGLLATVTVCLTLTAKRMARKNCLVKNLEAVETLGSTSTICSDKTGTLTQNRMTVAHMWSDNQIHEADTTENQSGVSFDKTSATWLALSRIAGLCNRAVFQANQENLPILKRAVAGDASESALLKCIELCCGSVKEMRERYTKIVEIPFNSTNKYQLSIHKNPNTAEPRHLLVMKGAPERILDRCSSILIHGKEQPLDEELKDAFQNAYLELGGLGERVLGFCHLFLPDEQFPEGFQFDTDDVNFPLDNLCFVGLISMIDPPRAAVPDAVGKCRSAGIKVIMVTGDHPITAKAIAKGVGIISEGNETVEDIAARLNIPVSQVNPRDAKACVVHGSDLKDMTSEQLDDILKYHTEIVFARTSPQQKLIIVEGCQRQGAIVAVTGDGVNDSPASKKADIGVAMGIAGSDVSKQAADMILLDDNFASIVTGVEEGRLIFDNLKKSIAYTLTSNIPEITPFLIFIIANIPLPLGTVTILCIDLGTDMVPAISLAYEQAESDIMKRQPRNPKTDKLVNEQLISMAYGQIGMIQALGGFFTYFVILAENGFLPIHLLGLRVNWDDRWINDVEDSYGQQWTYEQRKIVEFTCHTPFFVTIVVVQWADLVICKTRRNSVFQQGMKNKILIFGLFEETALAAFLSYCPGMGVALRMYPLKPTWWFCAFPYSLLIFVYDEVRKLIIRRRPGGWVEKETYY.

A propeptide spanning residues 1–5 is cleaved from the precursor; that stretch reads MGKGV. A compositionally biased stretch (basic and acidic residues) spans 1–11; that stretch reads MGKGVGRDKYE. The disordered stretch occupies residues 1–37; it reads MGKGVGRDKYEPAAVSEHGDKKKAKKERDMDELKKEV. Over 6–85 the chain is Cytoplasmic; the sequence is GRDKYEPAAV…NALTPPPTTP (80 aa). K9 is subject to N6-acetyllysine. Y10 carries the post-translational modification Phosphotyrosine. S16 is modified (phosphoserine; by PKC). K21 is subject to N6-acetyllysine. The segment covering 26–37 has biased composition (basic and acidic residues); that stretch reads KERDMDELKKEV. 2 positions are modified to phosphoserine: S38 and S45. A phosphoinositide-3 kinase binding region spans residues 80–82; sequence PPP. The chain crosses the membrane as a helical span at residues 86–106; the sequence is EWVKFCRQLFGGFSMLLWIGA. Over 107–129 the chain is Extracellular; it reads ILCFLAYGIQAATEEEPQNDNLY. A helical membrane pass occupies residues 130-150; sequence LGVVLSAVVIITGCFSYYQEA. At 151-286 the chain is on the cytoplasmic side; the sequence is KSSKIMESFK…GGQTPIAAEI (136 aa). The segment at 214-233 is disordered; sequence SSLTGESEPQTRSPDFTNEN. S226 carries the phosphoserine modification. At Y258 the chain carries Phosphotyrosine. The chain crosses the membrane as a helical span at residues 287–306; sequence EHFIHIITGVAVFLGVSFFI. At 307–318 the chain is on the extracellular side; sequence LSLILEYTWLEA. Residues 319–336 form a helical membrane-spanning segment; that stretch reads VIFLIGIIVANVPEGLLA. Residues 337–770 are Cytoplasmic-facing; the sequence is TVTVCLTLTA…EEGRLIFDNL (434 aa). Catalysis depends on D374, which acts as the 4-aspartylphosphate intermediate. A phosphoserine mark is found at S450 and S482. Residue K485 participates in ATP binding. Y540 is modified (phosphotyrosine). The segment at 594 to 715 is mediates interaction with SCN7A; the sequence is RAAVPDAVGK…QGAIVAVTGD (122 aa). K659 is subject to N6-succinyllysine. S666 and S673 each carry phosphoserine. Mg(2+) is bound by residues D715 and D719. A helical membrane pass occupies residues 771–790; the sequence is KKSIAYTLTSNIPEITPFLI. At 791-800 the chain is on the extracellular side; it reads FIIANIPLPL. The helical transmembrane segment at 801–821 threads the bilayer; it reads GTVTILCIDLGTDMVPAISLA. At 822-841 the chain is on the cytoplasmic side; it reads YEQAESDIMKRQPRNPKTDK. A helical transmembrane segment spans residues 842-864; that stretch reads LVNEQLISMAYGQIGMIQALGGF. The Extracellular portion of the chain corresponds to 865 to 916; the sequence is FTYFVILAENGFLPIHLLGLRVNWDDRWINDVEDSYGQQWTYEQRKIVEFTC. A helical transmembrane segment spans residues 917–936; that stretch reads HTPFFVTIVVVQWADLVICK. At 937 to 949 the chain is on the cytoplasmic side; sequence TRRNSVFQQGMKN. Phosphoserine; by PKA is present on S941. The chain crosses the membrane as a helical span at residues 950-968; it reads KILIFGLFEETALAAFLSY. Residues 969–983 lie on the Extracellular side of the membrane; it reads CPGMGVALRMYPLKP. A helical transmembrane segment spans residues 984-1004; it reads TWWFCAFPYSLLIFVYDEVRK. Topologically, residues 1005 to 1021 are cytoplasmic; that stretch reads LIIRRRPGGWVEKETYY.

It belongs to the cation transport ATPase (P-type) (TC 3.A.3) family. Type IIC subfamily. As to quaternary structure, the sodium/potassium-transporting ATPase is composed of a catalytic alpha subunit, an auxiliary non-catalytic beta subunit and an additional regulatory subunit. Interacts with regulatory subunit FXYD1. Interacts with regulatory subunit FXYD3. Interacts with SIK1. Interacts with SLC35G1 and STIM1. Interacts with CLN3; this interaction regulates the sodium/potassium-transporting ATPase complex localization at the plasma membrane. Interacts with SCN7A; activates ATP1A1 P-type sodium:potassium-exchanging transporter activity which indirectly signals to nearby neurons to regulate sodium homeostasis. Post-translationally, phosphorylation on Tyr-10 modulates pumping activity. Phosphorylation of Ser-941 by PKA modulates the response of ATP1A1 to PKC. Dephosphorylation by protein phosphatase 2A (PP2A) following increases in intracellular sodium, leading to increase catalytic activity.

The protein resides in the cell membrane. Its subcellular location is the basolateral cell membrane. It localises to the sarcolemma. The protein localises to the cell projection. It is found in the axon. The protein resides in the melanosome. It carries out the reaction K(+)(out) + Na(+)(in) + ATP + H2O = K(+)(in) + Na(+)(out) + ADP + phosphate + H(+). In terms of biological role, this is the catalytic component of the active enzyme, which catalyzes the hydrolysis of ATP coupled with the exchange of sodium and potassium ions across the plasma membrane. This action creates the electrochemical gradient of sodium and potassium ions, providing the energy for active transport of various nutrients. Could also be part of an osmosensory signaling pathway that senses body-fluid sodium levels and controls salt intake behavior as well as voluntary water intake to regulate sodium homeostasis. This Sus scrofa (Pig) protein is Sodium/potassium-transporting ATPase subunit alpha-1 (ATP1A1).